Consider the following 482-residue polypeptide: Methylenetetrahydrofolate--tRNA-(uracil-5-)-methyltransferase TrmFO (482 aa).

An FAD-binding site is contributed by 11–16; the sequence is GAGLAG.

This sequence belongs to the MnmG family. TrmFO subfamily. FAD is required as a cofactor.

The protein resides in the cytoplasm. It carries out the reaction uridine(54) in tRNA + (6R)-5,10-methylene-5,6,7,8-tetrahydrofolate + NADH + H(+) = 5-methyluridine(54) in tRNA + (6S)-5,6,7,8-tetrahydrofolate + NAD(+). The enzyme catalyses uridine(54) in tRNA + (6R)-5,10-methylene-5,6,7,8-tetrahydrofolate + NADPH + H(+) = 5-methyluridine(54) in tRNA + (6S)-5,6,7,8-tetrahydrofolate + NADP(+). In terms of biological role, catalyzes the folate-dependent formation of 5-methyl-uridine at position 54 (M-5-U54) in all tRNAs. The chain is Methylenetetrahydrofolate--tRNA-(uracil-5-)-methyltransferase TrmFO from Nitratidesulfovibrio vulgaris (strain DP4) (Desulfovibrio vulgaris).